Reading from the N-terminus, the 3080-residue chain is Adhesion G-protein coupled receptor G4 (3080 aa).

The N-terminal stretch at 1–27 (MKEHIIYQKLYGLILMSSFIFLSDTLS) is a signal peptide. Residues 28–2740 (LKGKKLDFFG…SRSTVDSVNE (2713 aa)) lie on the Extracellular side of the membrane. A Pentraxin (PTX) domain is found at 29–228 (KGKKLDFFGR…IPTVDRTLRC (200 aa)). 2 disulfides stabilise this stretch: cysteine 58/cysteine 123 and cysteine 200/cysteine 228. Aspartate 202 contributes to the Mg(2+) binding site. Residues asparagine 233, asparagine 487, asparagine 836, and asparagine 899 are each glycosylated (N-linked (GlcNAc...) asparagine). Residues 946 to 959 (SEGISAGSPTSGST) show a composition bias toward polar residues. The interval 946-965 (SEGISAGSPTSGSTHIFGEP) is disordered. Residue asparagine 1020 is glycosylated (N-linked (GlcNAc...) asparagine). The tract at residues 1274 to 1348 (VTEMSPSKNS…ITPTLTSSNT (75 aa)) is disordered. Polar residues-rich tracts occupy residues 1277–1296 (MSPSKNSFISYSRGTPSLEM), 1305–1315 (TKISSHQTHSP), and 1324–1348 (SDGNLASSPTSGSTQITPTLTSSNT). Residue asparagine 1519 is glycosylated (N-linked (GlcNAc...) asparagine). A compositionally biased stretch (polar residues) spans 2109–2139 (SRTTITANPRTVSHPSSFSRKTMSPSTTDHT). The tract at residues 2109-2141 (SRTTITANPRTVSHPSSFSRKTMSPSTTDHTLS) is disordered. Residues asparagine 2361 and asparagine 2640 are each glycosylated (N-linked (GlcNAc...) asparagine). One can recognise a GAIN-B domain in the interval 2578 to 2734 (MAFSIHSYEE…GVLMDLSRST (157 aa)). 2 disulfide bridges follow: cysteine 2685/cysteine 2716 and cysteine 2704/cysteine 2718. The tract at residues 2685–2734 (CAFWDFENNNGLGGWNSSGCKVKETNVNYTICQCDHLTHFGVLMDLSRST) is GPS. The tract at residues 2723-2734 (HFGVLMDLSRST) is stachel. The chain crosses the membrane as a helical span at residues 2741-2766 (QILALITYTGCGISSIFLGVAVVTYI). The Cytoplasmic segment spans residues 2767–2777 (AFHKLRKDYPA). A helical membrane pass occupies residues 2778-2800 (KILINLCTALLMLNLVFLINSWL). At 2801–2806 (SSFQKV) the chain is on the extracellular side. Residues 2807 to 2835 (GVCITAAVALHYFLLVSFTWMGLEAVHMY) form a helical membrane-spanning segment. Cysteine 2809 and cysteine 2886 are disulfide-bonded. Residues 2836 to 2849 (LALVKVFNIYIPNY) lie on the Cytoplasmic side of the membrane. Residues 2850–2870 (ILKFCLVGWGIPAIMVAITVS) traverse the membrane as a helical segment. At 2871–2892 (VKKDLYGTLSPTTPFCWIKDDS) the chain is on the extracellular side. The chain crosses the membrane as a helical span at residues 2893 to 2918 (IFYISVVAYFCLIFLMNLSMFCTVLV). The Cytoplasmic segment spans residues 2919–2937 (QLNSVKSQIQKTRRKMILH). A helical membrane pass occupies residues 2938-2961 (DLKGTMSLTFLLGLTWGFAFFAWG). At 2962 to 2965 (PMRN) the chain is on the extracellular side. A helical transmembrane segment spans residues 2966–2989 (FFLYLFAIFNTLQGFFIFVFHCVM). Residues 2990-3080 (KESVREQWQI…FDKDPYCSSP (91 aa)) are Cytoplasmic-facing. Over residues 3051-3065 (FKSLGSAQGTPSEIS) the composition is skewed to polar residues. Residues 3051-3080 (FKSLGSAQGTPSEISFPNDDFDKDPYCSSP) are disordered.

This sequence belongs to the G-protein coupled receptor 2 family. Adhesion G-protein coupled receptor (ADGR) subfamily. Homodimer; homodimerizes via its Pentraxin domain in a calcium-independent manner. Heterodimer of 2 chains generated by proteolytic processing; the large extracellular N-terminal fragment and the membrane-bound C-terminal fragment predominantly remain associated and non-covalently linked. In terms of processing, autoproteolytically processed at the GPS region of the GAIN-B domain; this cleavage modulates receptor activity. Post-translationally, N-glycosylated. Detected in fetal retina. Highly expressed in normal enterochromaffin cells and in neuroendocrine carcinoma. Detected in normal liver; highly expressed in primary liver carcinoma.

The protein localises to the membrane. With respect to regulation, forms a heterodimer of 2 chains generated by proteolytic processing that remain associated through non-covalent interactions mediated by the GAIN-B domain. In the inactivated receptor, the Stachel sequence (also named stalk) is embedded in the GAIN-B domain, where it adopts a beta-strand conformation. On activation, the Stachel moves into the 7 transmembrane region and adopts a twisted hook-shaped configuration that forms contacts within the receptor, leading to coupling of a G-alpha protein, which activates signaling. The cleaved GAIN-B and N-terminal domains can then dissociate from the rest of the receptor. Functionally, orphan adhesion G-protein coupled receptor (aGPCR). Ligand binding causes a conformation change that triggers signaling via guanine nucleotide-binding proteins (G proteins) and modulates the activity of downstream effectors, such as adenylate cyclase. ADGRG4 is coupled to G(s) G proteins and mediates activation of adenylate cyclase activity. May be act as sensor of mechanical forces. The protein is Adhesion G-protein coupled receptor G4 of Homo sapiens (Human).